Here is a 125-residue protein sequence, read N- to C-terminus: Small ribosomal subunit protein uS12m (125 aa).

The protein belongs to the universal ribosomal protein uS12 family.

It localises to the mitochondrion. Its function is as follows. Protein S12 is involved in the translation initiation step. The chain is Small ribosomal subunit protein uS12m (RPS12) from Allium cepa (Onion).